Reading from the N-terminus, the 172-residue chain is Photosystem I assembly protein Ycf3 (172 aa).

TPR repeat units lie at residues 35–68 (AFSYYRNGMSAQAEGEYAEALQNYYEAMRLEVDA), 72–105 (SYILYNIGLIHTSNGEHGRALEYYYQALERNPSL), and 120–153 (GEQAIENGQSEISQILFEKAADYWKEAIRLAPTN).

This sequence belongs to the Ycf3 family.

It is found in the plastid. Its subcellular location is the chloroplast thylakoid membrane. Essential for the assembly of the photosystem I (PSI) complex. May act as a chaperone-like factor to guide the assembly of the PSI subunits. The protein is Photosystem I assembly protein Ycf3 of Chlamydomonas reinhardtii (Chlamydomonas smithii).